A 297-amino-acid chain; its full sequence is Ribosomal RNA small subunit methyltransferase H (297 aa).

S-adenosyl-L-methionine-binding positions include 37-39 (GGH), Glu-56, Phe-87, Asp-102, and His-109.

Belongs to the methyltransferase superfamily. RsmH family.

It is found in the cytoplasm. The catalysed reaction is cytidine(1402) in 16S rRNA + S-adenosyl-L-methionine = N(4)-methylcytidine(1402) in 16S rRNA + S-adenosyl-L-homocysteine + H(+). Functionally, specifically methylates the N4 position of cytidine in position 1402 (C1402) of 16S rRNA. This is Ribosomal RNA small subunit methyltransferase H from Borrelia recurrentis (strain A1).